A 167-amino-acid chain; its full sequence is NAD(P)H-quinone oxidoreductase subunit I, chloroplastic (167 aa).

4Fe-4S ferredoxin-type domains lie at 55–84 (GRIHFEFDKCIACEVCVRVCPIDLPVVDWK) and 95–124 (LNYSIDFGICIFCGNCVEYCPTNCLSMTEE). 8 residues coordinate [4Fe-4S] cluster: Cys64, Cys67, Cys70, Cys74, Cys104, Cys107, Cys110, and Cys114.

It belongs to the complex I 23 kDa subunit family. In terms of assembly, NDH is composed of at least 16 different subunits, 5 of which are encoded in the nucleus. It depends on [4Fe-4S] cluster as a cofactor.

The protein resides in the plastid. The protein localises to the chloroplast thylakoid membrane. The catalysed reaction is a plastoquinone + NADH + (n+1) H(+)(in) = a plastoquinol + NAD(+) + n H(+)(out). It carries out the reaction a plastoquinone + NADPH + (n+1) H(+)(in) = a plastoquinol + NADP(+) + n H(+)(out). Its function is as follows. NDH shuttles electrons from NAD(P)H:plastoquinone, via FMN and iron-sulfur (Fe-S) centers, to quinones in the photosynthetic chain and possibly in a chloroplast respiratory chain. The immediate electron acceptor for the enzyme in this species is believed to be plastoquinone. Couples the redox reaction to proton translocation, and thus conserves the redox energy in a proton gradient. The sequence is that of NAD(P)H-quinone oxidoreductase subunit I, chloroplastic from Aethionema cordifolium (Lebanon stonecress).